We begin with the raw amino-acid sequence, 425 residues long: Serine--tRNA ligase (425 aa).

Residue 230–232 coordinates L-serine; it reads TAE. 261–263 contacts ATP; the sequence is RSE. Residue E284 coordinates L-serine. Residue 348 to 351 participates in ATP binding; sequence EISS. S384 contributes to the L-serine binding site.

This sequence belongs to the class-II aminoacyl-tRNA synthetase family. Type-1 seryl-tRNA synthetase subfamily. Homodimer. The tRNA molecule binds across the dimer.

It localises to the cytoplasm. The enzyme catalyses tRNA(Ser) + L-serine + ATP = L-seryl-tRNA(Ser) + AMP + diphosphate + H(+). It carries out the reaction tRNA(Sec) + L-serine + ATP = L-seryl-tRNA(Sec) + AMP + diphosphate + H(+). Its pathway is aminoacyl-tRNA biosynthesis; selenocysteinyl-tRNA(Sec) biosynthesis; L-seryl-tRNA(Sec) from L-serine and tRNA(Sec): step 1/1. Functionally, catalyzes the attachment of serine to tRNA(Ser). Is also able to aminoacylate tRNA(Sec) with serine, to form the misacylated tRNA L-seryl-tRNA(Sec), which will be further converted into selenocysteinyl-tRNA(Sec). The chain is Serine--tRNA ligase from Streptococcus sanguinis (strain SK36).